Here is a 209-residue protein sequence, read N- to C-terminus: Ribosomal RNA large subunit methyltransferase E (209 aa).

S-adenosyl-L-methionine is bound by residues Gly63, Trp65, Asp83, Asp99, and Asp124. Lys164 acts as the Proton acceptor in catalysis.

Belongs to the class I-like SAM-binding methyltransferase superfamily. RNA methyltransferase RlmE family.

It localises to the cytoplasm. It catalyses the reaction uridine(2552) in 23S rRNA + S-adenosyl-L-methionine = 2'-O-methyluridine(2552) in 23S rRNA + S-adenosyl-L-homocysteine + H(+). In terms of biological role, specifically methylates the uridine in position 2552 of 23S rRNA at the 2'-O position of the ribose in the fully assembled 50S ribosomal subunit. This Vibrio vulnificus (strain CMCP6) protein is Ribosomal RNA large subunit methyltransferase E.